A 720-amino-acid polypeptide reads, in one-letter code: MRFSIKMRASARVSSSPSTSDGSSGDHTESRDRADRHISGAERIVSASDIMQTVTELEHRAWTHSNGQPDDVVVSVHRVDEDEITHIPALTRETRHTHTVDDAHRTITEILRDAGIRTAEHALKALTRIRGMRGAMLLDADTGERRDTKDIRGVRVTALDNDMATGADAAEEMSSSAATKPYYCEALTLASKVQYHPAVCAELCISDDPDYTTGYVSTSGRYVRIENIKPMGSPQGGRVFLVRGTDDEIADCINYLENTAVIVHGIPWPPQDNHSAHRDEPDAFGAIPATDIATDLTTFAEQSLTAWENKGLRRYPLEFSSAPMPRTTVAGSDTLLFSSSNYLGLSEHPDVIAAATEALKHYGAGTGGSRLTTGNFTIHTSTERTLAEFTGYDDAVLFGTGYQANGAALATLATNIPEAPSTAPANTPGMTIFSDELNHASLIDGIRMATRGNAAVRIYPHKDTEHLENALAQCASPRKLIVSDGVFSMNGDIAPLPSIMRLARAHGSWVLIDDAHGTGTLGRTGRGIVEYWSDARRQDAGADSSPGEELPNDSDLQPDLLVVTASKALGSEGAAVCCSTPVAEFLRNRARGYVFSTSSAPASVAATQVAVATILREPERVHRLQDNSLYLRNQLREHGIPLVDGTSNSTPIIPIFIGDEADAVRISQGLSDRGFHVPGIRYPTVARGQAILRVTTMATHTRDDLDHLVDALRDLMPHSA.

The segment at 1-39 (MRFSIKMRASARVSSSPSTSDGSSGDHTESRDRADRHIS) is disordered. Low complexity predominate over residues 8–23 (RASARVSSSPSTSDGS). A compositionally biased stretch (basic and acidic residues) spans 24–39 (SGDHTESRDRADRHIS). Arg-314 contacts substrate. 401–402 (GY) contacts pyridoxal 5'-phosphate. His-439 lines the substrate pocket. Residues Ser-488, 513 to 516 (DDAH), and 564 to 567 (TASK) each bind pyridoxal 5'-phosphate. Lys-567 carries the N6-(pyridoxal phosphate)lysine modification. Thr-684 is a substrate binding site.

In the N-terminal section; belongs to the BioW family. The protein in the C-terminal section; belongs to the class-II pyridoxal-phosphate-dependent aminotransferase family. BioF subfamily. In terms of assembly, homodimer. The cofactor is Mg(2+). Pyridoxal 5'-phosphate serves as cofactor.

The catalysed reaction is heptanedioate + ATP + CoA = 6-carboxyhexanoyl-CoA + AMP + diphosphate. It catalyses the reaction 6-carboxyhexanoyl-[ACP] + L-alanine + H(+) = (8S)-8-amino-7-oxononanoate + holo-[ACP] + CO2. Its pathway is metabolic intermediate metabolism; pimeloyl-CoA biosynthesis; pimeloyl-CoA from pimelate: step 1/1. It participates in cofactor biosynthesis; biotin biosynthesis. In terms of biological role, catalyzes both the decarboxylative condensation of pimeloyl-[acyl-carrier protein] and L-alanine to produce 8-amino-7-oxononanoate (AON), [acyl-carrier protein], and carbon dioxide, and the transformation of pimelate into pimeloyl-CoA with concomitant hydrolysis of ATP to AMP. The chain is Biotin biosynthesis bifunctional protein BioWF (bioWF) from Corynebacterium kroppenstedtii (strain DSM 44385 / JCM 11950 / CIP 105744 / CCUG 35717).